The chain runs to 328 residues: Alanine racemase (328 aa).

The active-site Proton acceptor; specific for D-alanine is the Lys-33. Position 33 is an N6-(pyridoxal phosphate)lysine (Lys-33). Arg-118 contributes to the substrate binding site. Tyr-237 acts as the Proton acceptor; specific for L-alanine in catalysis. Position 283 (Met-283) interacts with substrate.

The protein belongs to the alanine racemase family. Pyridoxal 5'-phosphate serves as cofactor.

The catalysed reaction is L-alanine = D-alanine. Its pathway is amino-acid biosynthesis; D-alanine biosynthesis; D-alanine from L-alanine: step 1/1. Catalyzes the interconversion of L-alanine and D-alanine. May also act on other amino acids. The chain is Alanine racemase (alr) from Campylobacter jejuni subsp. jejuni serotype O:2 (strain ATCC 700819 / NCTC 11168).